The sequence spans 588 residues: Progranulin (588 aa).

Positions 1–17 (MWILVSWLALVARLVAG) are cleaved as a signal peptide. N-linked (GlcNAc...) asparagine glycosylation is present at asparagine 38. Cystine bridges form between cysteine 125/cysteine 138, cysteine 132/cysteine 148, cysteine 281/cysteine 293, cysteine 287/cysteine 303, cysteine 294/cysteine 311, cysteine 304/cysteine 318, cysteine 312/cysteine 325, cysteine 319/cysteine 332, cysteine 363/cysteine 375, cysteine 369/cysteine 385, cysteine 394/cysteine 407, and cysteine 401/cysteine 413. N-linked (GlcNAc...) asparagine glycosylation occurs at asparagine 372. The N-linked (GlcNAc...) asparagine glycan is linked to asparagine 525.

Belongs to the granulin family. Progranulin is secreted as a homodimer. Interacts with SLPI; interaction protects progranulin from proteolysis. Interacts (via region corresponding to granulin-7 peptide) with CTSD; stabilizes CTSD and increases its proteolytic activity. Interacts (via region corresponding to granulin-7 peptide) with SORT1; this interaction mediates endocytosis and lysosome delivery of progranulin; interaction occurs at the neuronal cell surface in a stressed nervous system. Interacts with PSAP; facilitates lysosomal delivery of progranulin from the extracellular space and the biosynthetic pathway. Forms a complex with PSAP and M6PR; PSAP bridges the binding between progranulin and M6PR. Forms a complex with PSAP and SORT1; progranulin bridges the interaction between PSAP and SORT1; facilitates lysosomal targeting of PSAP via SORT1; interaction enhances PSAP uptake in primary cortical neurons. Interacts (via regions corresponding to granulin-2 and granulin-7 peptides) with GBA1; this interaction prevents aggregation of GBA1-SCARB2 complex via interaction with HSPA1A upon stress. Interacts (via region corresponding to granulin-7 peptide) with HSPA1A; mediates recruitment of HSPA1A to GBA1 and prevents GBA1 aggregation in response to stress. Cleaved by ELANE; proteolysis is blocked by SLPI and is concentration- and time-dependent and induces CXCL8/IL-8 production; granulin-3 and granulin-4 are resistant to ELANE. Cleaved by CTSL in lysosome thus regulating the maturation and turnover of progranulin within the lysosome. As to expression, ubiquitous; most abundant in the spleen and several tissues of endocrine significance.

The protein resides in the secreted. The protein localises to the lysosome. Its function is as follows. Secreted protein that acts as a key regulator of lysosomal function and as a growth factor involved in inflammation, wound healing and cell proliferation. Regulates protein trafficking to lysosomes, and also the activity of lysosomal enzymes. Also facilitates the acidification of lysosomes, causing degradation of mature CTSD by CTSB. In addition, functions as a wound-related growth factor that acts directly on dermal fibroblasts and endothelial cells to promote division, migration and the formation of capillary-like tubule structures. Also promotes epithelial cell proliferation by blocking TNF-mediated neutrophil activation preventing release of oxidants and proteases. Moreover, modulates inflammation in neurons by preserving neurons survival, axonal outgrowth and neuronal integrity. Functionally, inhibits epithelial cell proliferation and induces epithelial cells to secrete IL-8. Stabilizes CTSD through interaction with CTSD leading to maintain its aspartic-type peptidase activity. The protein is Progranulin (Grn) of Rattus norvegicus (Rat).